Consider the following 204-residue polypeptide: Large ribosomal subunit protein uL4 (204 aa).

Residues 42–52 (GTKAQKSRSQV) are compositionally biased toward polar residues. Residues 42–70 (GTKAQKSRSQVSGTTKKSKKQKGGGARHG) form a disordered region.

This sequence belongs to the universal ribosomal protein uL4 family. In terms of assembly, part of the 50S ribosomal subunit.

Its function is as follows. One of the primary rRNA binding proteins, this protein initially binds near the 5'-end of the 23S rRNA. It is important during the early stages of 50S assembly. It makes multiple contacts with different domains of the 23S rRNA in the assembled 50S subunit and ribosome. Forms part of the polypeptide exit tunnel. The polypeptide is Large ribosomal subunit protein uL4 (Xylella fastidiosa (strain M12)).